The chain runs to 147 residues: 3-dehydroquinate dehydratase (147 aa).

Tyr-23 (proton acceptor) is an active-site residue. Substrate is bound by residues Asn-75, His-81, and Asp-88. The active-site Proton donor is His-101. Residues 102–103 (LS) and Arg-112 contribute to the substrate site.

It belongs to the type-II 3-dehydroquinase family. In terms of assembly, homododecamer.

The enzyme catalyses 3-dehydroquinate = 3-dehydroshikimate + H2O. It functions in the pathway metabolic intermediate biosynthesis; chorismate biosynthesis; chorismate from D-erythrose 4-phosphate and phosphoenolpyruvate: step 3/7. Its function is as follows. Catalyzes a trans-dehydration via an enolate intermediate. The sequence is that of 3-dehydroquinate dehydratase from Hahella chejuensis (strain KCTC 2396).